The primary structure comprises 859 residues: Glucans biosynthesis glucosyltransferase H (859 aa).

6 helical membrane passes run 144-166 (YILL…GILP), 200-222 (LLLF…MGFL), 523-545 (VMSY…LLAV), 573-595 (VALF…ILIW), 608-630 (VTVS…MLFH), and 684-706 (SFLW…SVIS).

It belongs to the glycosyltransferase 2 family. OpgH subfamily.

The protein localises to the cell inner membrane. It functions in the pathway glycan metabolism; osmoregulated periplasmic glucan (OPG) biosynthesis. Its function is as follows. Involved in the biosynthesis of osmoregulated periplasmic glucans (OPGs). In Pseudomonas syringae pv. tomato (strain ATCC BAA-871 / DC3000), this protein is Glucans biosynthesis glucosyltransferase H.